A 1052-amino-acid polypeptide reads, in one-letter code: Membrane-bound transcription factor site-1 protease (1052 aa).

The N-terminal stretch at 1-17 (MKLVNIWLLLLVVLLCG) is a signal peptide. Positions 18–186 (KKHLGDRLGK…TGRHSSRRLL (169 aa)) are excised as a propeptide. The N-linked (GlcNAc...) asparagine glycan is linked to N148. S168 is subject to Phosphoserine. The Lumenal portion of the chain corresponds to 187 to 999 (RAIPRQVAQT…MPGRYNQEVG (813 aa)). Residues 190 to 472 (PRQVAQTLQA…HGKLDLLRAY (283 aa)) enclose the Peptidase S8 domain. D218 acts as the Charge relay system in catalysis. An N-linked (GlcNAc...) asparagine glycan is attached at N236. H249 acts as the Charge relay system in catalysis. N-linked (GlcNAc...) asparagine glycosylation is present at N305. Residue S414 is the Charge relay system of the active site. N-linked (GlcNAc...) asparagine glycans are attached at residues N515 and N728. Over residues 877-887 (PSLSHSGNRQR) the composition is skewed to polar residues. The disordered stretch occupies residues 877-900 (PSLSHSGNRQRPPSGAGLAPPERM). N939 carries N-linked (GlcNAc...) asparagine glycosylation. A helical membrane pass occupies residues 1000–1022 (QTIPVFAFLGAMVALAFFVVQIS). The Cytoplasmic portion of the chain corresponds to 1023-1052 (KAKSRPKRRRPRAKRPQLAQQAHPARTPSV). Positions 1026-1037 (SRPKRRRPRAKR) are enriched in basic residues. Residues 1026–1052 (SRPKRRRPRAKRPQLAQQAHPARTPSV) form a disordered region.

This sequence belongs to the peptidase S8 family. As to quaternary structure, interacts with LYSET; this interaction bridges GNPTAB to MBTPS1. The cofactor is Ca(2+). Post-translationally, the 148 kDa zymogen is processed progressively into two membrane-bound 120 and 106 kDa forms in the endoplasmic reticulum, and late into a secreted 98 kDa form. The propeptide is autocatalytically removed through an intramolecular cleavage after Leu-186. Further cleavage generates 14, 10, and 8 kDa intermediates. As to expression, widely expressed. In adult rat, highly expressed in anterior pituitary, thyroid and adrenal glands and in liver. In 2-day old rat, detected in developing skin, striated muscles, cardiac muscles, bones, teeth and internal organs. Highly expressed in retina, cerebellum, pituitary, submaxillary, thyroid and adrenal glands, molars, thymus, kidney and intestine.

The protein resides in the endoplasmic reticulum membrane. It localises to the golgi apparatus membrane. It carries out the reaction Processes precursors containing basic and hydrophobic/aliphatic residues at P4 and P2, respectively, with a relatively relaxed acceptance of amino acids at P1 and P3.. Its activity is regulated as follows. Inhibited by divalent copper and zinc ions, but not by nickel or cobalt. Inhibited by its prosegment, but not smaller fragments. Inhibited by 4-(2-aminoethyl)benzenesulfonyl fluoride (AEBSF), a serine protease inhibitor. Serine protease that cleaves after hydrophobic or small residues, provided that Arg or Lys is in position P4: known substrates include SREBF1/SREBP1, SREBF2/SREBP2, BDNF, GNPTAB, ATF6, ATF6B and FAM20C. Cleaves substrates after Arg-Ser-Val-Leu (SREBP2), Arg-His-Leu-Leu (ATF6), Arg-Gly-Leu-Thr (BDNF) and its own propeptide after Arg-Arg-Leu-Leu. Catalyzes the first step in the proteolytic activation of the sterol regulatory element-binding proteins (SREBPs) SREBF1/SREBP1 and SREBF2/SREBP2. Also mediates the first step in the proteolytic activation of the cyclic AMP-dependent transcription factor ATF-6 (ATF6 and ATF6B). Mediates the protein cleavage of GNPTAB into subunit alpha and beta, thereby participating in biogenesis of lysosomes. Cleaves the propeptide from FAM20C which is required for FAM20C secretion from the Golgi apparatus membrane and for enhancement of FAM20C kinase activity, promoting osteoblast differentiation and biomineralization. Involved in the regulation of M6P-dependent Golgi-to-lysosome trafficking of lysosomal enzymes. It is required for the activation of CREB3L2/BBF2H7, a transcriptional activator of MIA3/TANGO and other genes controlling mega vesicle formation. Therefore, it plays a key role in the regulation of mega vesicle-mediated collagen trafficking. In astrocytes and osteoblasts, upon DNA damage and ER stress, mediates the first step of the regulated intramembrane proteolytic activation of the transcription factor CREB3L1, leading to the inhibition of cell-cycle progression. This is Membrane-bound transcription factor site-1 protease (Mbtps1) from Rattus norvegicus (Rat).